Here is a 218-residue protein sequence, read N- to C-terminus: MAKTSTSVIVAKTLVHAAALAPIALLGWQFWQVWQSGSDALGADPVAEIEHRTGLWALRFLLITLAITPLRQLTGQAVLIRFRRMLGLYAFFYATVHLAAYLTLDLRGFWTQIFEEILKRPYITVGFAAWLLLMPLAITSTQGWMRRLKRNWGRVHMLIYPIGLLAVLHFWWLVKSDIREPALYAGILAVLLGWRAWKKLSARRTKARRSAPPQATPR.

Helical transmembrane passes span 8-28, 60-80, 86-106, 121-141, and 155-175; these read VIVAKTLVHAAALAPIALLGW, FLLITLAITPLRQLTGQAVLI, LGLYAFFYATVHLAAYLTLDL, PYITVGFAAWLLLMPLAITST, and VHMLIYPIGLLAVLHFWWLVK.

Belongs to the MsrQ family. Heterodimer of a catalytic subunit (MsrP) and a heme-binding subunit (MsrQ). It depends on FMN as a cofactor. Heme b is required as a cofactor.

Its subcellular location is the cell inner membrane. Part of the MsrPQ system that repairs oxidized periplasmic proteins containing methionine sulfoxide residues (Met-O), using respiratory chain electrons. Thus protects these proteins from oxidative-stress damage caused by reactive species of oxygen and chlorine generated by the host defense mechanisms. MsrPQ is essential for the maintenance of envelope integrity under bleach stress, rescuing a wide series of structurally unrelated periplasmic proteins from methionine oxidation. MsrQ provides electrons for reduction to the reductase catalytic subunit MsrP, using the quinone pool of the respiratory chain. This is Protein-methionine-sulfoxide reductase heme-binding subunit MsrQ from Xanthomonas oryzae pv. oryzae (strain MAFF 311018).